The following is a 299-amino-acid chain: MMCFLLIISSILVVFAFVLGNVANGFIALVNVIDWVNTRKISSAEQILTALVVSRIGLLWVMLFLWYATVFNSALYGLEVRIVASNAWAVTNHFSMWLAASLSIFCLLKIANFSNLISLHLKKRIKSVVLVILLGPLVFLICNLAVITMDERVWTKEYEGNVTWKIKLRNAIHLSSLTVTTLANLIPFTLSLICFLLLICSLCKHLKKMRLHSKGSQDPSTKVHIKALQTVTSFLMLFAIYFLCIITSTWNLRTQQSKLVLLLCQTVAIMYPSFHSFILIMGSRKLKQTFLSVLWQMTR.

M1 is a topological domain (extracellular). A helical membrane pass occupies residues 2–22; the sequence is MCFLLIISSILVVFAFVLGNV. The Cytoplasmic segment spans residues 23–55; that stretch reads ANGFIALVNVIDWVNTRKISSAEQILTALVVSR. Residues 56–76 traverse the membrane as a helical segment; the sequence is IGLLWVMLFLWYATVFNSALY. Over 77 to 87 the chain is Extracellular; that stretch reads GLEVRIVASNA. A helical membrane pass occupies residues 88–108; that stretch reads WAVTNHFSMWLAASLSIFCLL. Topologically, residues 109–127 are cytoplasmic; that stretch reads KIANFSNLISLHLKKRIKS. Residues 128-148 form a helical membrane-spanning segment; the sequence is VVLVILLGPLVFLICNLAVIT. Residues 149–181 lie on the Extracellular side of the membrane; sequence MDERVWTKEYEGNVTWKIKLRNAIHLSSLTVTT. An N-linked (GlcNAc...) asparagine glycan is attached at N161. Residues 182–202 traverse the membrane as a helical segment; sequence LANLIPFTLSLICFLLLICSL. Residues 203–226 lie on the Cytoplasmic side of the membrane; the sequence is CKHLKKMRLHSKGSQDPSTKVHIK. A helical transmembrane segment spans residues 227–247; sequence ALQTVTSFLMLFAIYFLCIIT. Residues 248 to 259 are Extracellular-facing; that stretch reads STWNLRTQQSKL. Residues 260–280 form a helical membrane-spanning segment; that stretch reads VLLLCQTVAIMYPSFHSFILI. Over 281–299 the chain is Cytoplasmic; sequence MGSRKLKQTFLSVLWQMTR.

This sequence belongs to the G-protein coupled receptor T2R family. As to expression, expressed in subsets of taste receptor cells of the tongue and exclusively in gustducin-positive cells.

Its subcellular location is the membrane. Functionally, receptor that may play a role in the perception of bitterness and is gustducin-linked. May play a role in sensing the chemical composition of the gastrointestinal content. The activity of this receptor may stimulate alpha gustducin, mediate PLC-beta-2 activation and lead to the gating of TRPM5. The chain is Taste receptor type 2 member 19 (TAS2R19) from Homo sapiens (Human).